A 244-amino-acid chain; its full sequence is Phosphoadenosine 5'-phosphosulfate reductase (244 aa).

Catalysis depends on C239, which acts as the Nucleophile; cysteine thiosulfonate intermediate.

The protein belongs to the PAPS reductase family. CysH subfamily.

It localises to the cytoplasm. It catalyses the reaction [thioredoxin]-disulfide + sulfite + adenosine 3',5'-bisphosphate + 2 H(+) = [thioredoxin]-dithiol + 3'-phosphoadenylyl sulfate. Its pathway is sulfur metabolism; hydrogen sulfide biosynthesis; sulfite from sulfate: step 3/3. Functionally, catalyzes the formation of sulfite from phosphoadenosine 5'-phosphosulfate (PAPS) using thioredoxin as an electron donor. This is Phosphoadenosine 5'-phosphosulfate reductase from Klebsiella pneumoniae subsp. pneumoniae (strain ATCC 700721 / MGH 78578).